We begin with the raw amino-acid sequence, 196 residues long: Putative adenylate kinase (196 aa).

Residues G10, G12, K13, T14, and S15 each contribute to the ATP site. An NMP region spans residues 30 to 53 (YLNDLIKEEHLYSEVDEERDSVIA). The segment at 118 to 128 (KRGYSEEKINE) is LID. Position 119 (R119) interacts with ATP.

It belongs to the adenylate kinase family. AK6 subfamily. In terms of assembly, interacts with uS11. Not a structural component of 40S pre-ribosomes, but transiently interacts with them by binding to uS11.

It carries out the reaction AMP + ATP = 2 ADP. The enzyme catalyses ATP + H2O = ADP + phosphate + H(+). Functionally, broad-specificity nucleoside monophosphate (NMP) kinase that catalyzes the reversible transfer of the terminal phosphate group between nucleoside triphosphates and monophosphates. Also has ATPase activity. Involved in the late maturation steps of the 30S ribosomal particles, specifically 16S rRNA maturation. While NMP activity is not required for ribosome maturation, ATPase activity is. Associates transiently with small ribosomal subunit protein uS11. ATP hydrolysis breaks the interaction with uS11. May temporarily remove uS11 from the ribosome to enable a conformational change of the ribosomal RNA that is needed for the final maturation step of the small ribosomal subunit. The protein is Putative adenylate kinase of Methanosarcina mazei (strain ATCC BAA-159 / DSM 3647 / Goe1 / Go1 / JCM 11833 / OCM 88) (Methanosarcina frisia).